The primary structure comprises 513 residues: MSQQRDLIVVVDFGGQYSHLIARRVREAQVYCEIWPFTAPVQRYREAGVKGIIFSGGPASVEQADAPRIDPAIYELGIPILGICYGMQLMALQLGGEVRRGQQGEYGRATLRLADAEHPLLRGLGRESLVWMSHFDSVTRVPSGFRVLGATENTAVAVMGDDARRLYGVQFHPEVVHTAQGREILRNFLFNIAGCRGDWTTESFITRQVEEIRRQVGSGRVLCALSGGVDSSVAAVLVHKAVGDQLTCIFVDHGLMRKGEPEQVVRTFRDHFHIHLVHVDASERFLSKLRGVTDPEQKRKIIGNEFIRLFEDEARKLGQIDFLVQGTVYPDVIESGTETARVIKSHHNVGGLPEDMRFQLIEPFRQLFKDEVRAVGRALGVPEEIVGRHPFPGPGLGVRVLGEVTPEKLEILREADRIFVEEIRKAGLYDELWQAFTVLPDVRSVGVMGDERTYAYPVVLRAVTSEDAMTADFYRLPWDLLERIASRIVNEVPHVNRVVYDVTSKPPGTIEWE.

Positions 7 to 198 constitute a Glutamine amidotransferase type-1 domain; sequence LIVVVDFGGQ…LFNIAGCRGD (192 aa). The Nucleophile role is filled by Cys-84. Catalysis depends on residues His-172 and Glu-174. Residues 199-388 enclose the GMPS ATP-PPase domain; that stretch reads WTTESFITRQ…LGVPEEIVGR (190 aa). Residue 226–232 coordinates ATP; the sequence is SGGVDSS.

In terms of assembly, homodimer.

It carries out the reaction XMP + L-glutamine + ATP + H2O = GMP + L-glutamate + AMP + diphosphate + 2 H(+). The protein operates within purine metabolism; GMP biosynthesis; GMP from XMP (L-Gln route): step 1/1. Catalyzes the synthesis of GMP from XMP. The polypeptide is GMP synthase [glutamine-hydrolyzing] (Symbiobacterium thermophilum (strain DSM 24528 / JCM 14929 / IAM 14863 / T)).